A 144-amino-acid chain; its full sequence is Maximins 3/H11 type 1 (144 aa).

Residues 1 to 18 (MNFKYIVAVSFLIASAYA) form the signal peptide. 2 consecutive propeptides follow at residues 19–43 (RSVQ…REIR) and 73–122 (RTAE…KKEK). Ile143 carries the isoleucine amide modification.

This sequence belongs to the bombinin family. In terms of tissue distribution, expressed by the skin glands.

The protein resides in the secreted. Its function is as follows. Maximin-3 shows antibacterial activity against both Gram-positive and Gram-negative bacteria. It also shows antimicrobial activity against the fungus C.albicans, but not against A.flavus nor P.uticale. It has little hemolytic activity. It possess a significant cytotoxicity against tumor cell lines. It possess a significant anti-HIV activity. It shows high spermicidal activity. Functionally, maximin-H11 shows antimicrobial activity against bacteria and against the fungus C.albicans. Shows strong hemolytic activity. This chain is Maximins 3/H11 type 1, found in Bombina maxima (Giant fire-bellied toad).